The following is a 302-amino-acid chain: Nucleotide-binding protein Bcenmc03_2806 (302 aa).

Residue 8–15 (GISGSGKS) coordinates ATP. 57–60 (DARS) is a GTP binding site.

The protein belongs to the RapZ-like family.

Functionally, displays ATPase and GTPase activities. In Burkholderia orbicola (strain MC0-3), this protein is Nucleotide-binding protein Bcenmc03_2806.